A 73-amino-acid polypeptide reads, in one-letter code: MARKKESYESLMIKLQDIIEEMESEEISLEGSMKNYEEGIKLCNKMYKVLNEAEAKIKILDGNEEKEFVGNDN.

It belongs to the XseB family. As to quaternary structure, heterooligomer composed of large and small subunits.

The protein localises to the cytoplasm. The catalysed reaction is Exonucleolytic cleavage in either 5'- to 3'- or 3'- to 5'-direction to yield nucleoside 5'-phosphates.. In terms of biological role, bidirectionally degrades single-stranded DNA into large acid-insoluble oligonucleotides, which are then degraded further into small acid-soluble oligonucleotides. The protein is Exodeoxyribonuclease 7 small subunit of Clostridium novyi (strain NT).